A 586-amino-acid polypeptide reads, in one-letter code: MKRTHNATELDIHLVGREVMLNGWVDTRRDHGGLIFVDLRDRSGIIQLVFSPEVKEEAFHLAEQIRSEYVIAVRGKLSLRPEATENPNLKTGKVEVYVEDIEVLSPAKTPPFYIENDIDVDENLRLKYRYLDLRRPEMRDNLLLRHRVVKCMRDFLDSRGFIEIETPILTKSTPEGARDYLVPSRVHPGEFYALPQSPQIFKQILMVAGMEKYFQIARCFRDEDLRADRQPEFTQLDMEMSFVDEEDIIVLVEEMMAEIFFKAAGKVIRTPFPRLAYDDAMINYGSDKPDLRFGLEIVELSEMLQNTQFKVFASALQSGGVVRALNAKGCGSFTRREIDALGAMAVENGAKGMAWILVQENELRSPITKFLSEEEIEQILMTTGAEAGDLILFGADQAEIVARVMGILRLELGRKKGLIAEEELNFVWVTDFPLLEYDEEEKRYQAKHHPFTSPRLEDIEIMDSEPGRVKARAYDLVLNGTELGGGSIRIHRREWQEKMFSVLGMSQEEARDKFGFMLEAFEYGTPPHGGIAFGVDRLLMLLAGRNSVRDVMAFPKTQSASCPMTEAPSTVSARQLRELALRIREK.

An L-aspartate-binding site is contributed by E175. Residues 199-202 are aspartate; the sequence is QIFK. Residue R221 coordinates L-aspartate. Residues 221–223 and Q230 each bind ATP; that span reads RDE. H448 contributes to the L-aspartate binding site. Residue E482 coordinates ATP. R489 contributes to the L-aspartate binding site. Position 534–537 (534–537) interacts with ATP; that stretch reads GVDR.

This sequence belongs to the class-II aminoacyl-tRNA synthetase family. Type 1 subfamily. Homodimer.

The protein resides in the cytoplasm. It catalyses the reaction tRNA(Asx) + L-aspartate + ATP = L-aspartyl-tRNA(Asx) + AMP + diphosphate. In terms of biological role, aspartyl-tRNA synthetase with relaxed tRNA specificity since it is able to aspartylate not only its cognate tRNA(Asp) but also tRNA(Asn). Reaction proceeds in two steps: L-aspartate is first activated by ATP to form Asp-AMP and then transferred to the acceptor end of tRNA(Asp/Asn). In Syntrophomonas wolfei subsp. wolfei (strain DSM 2245B / Goettingen), this protein is Aspartate--tRNA(Asp/Asn) ligase.